A 160-amino-acid chain; its full sequence is Small ribosomal subunit protein uS7A (160 aa).

This sequence belongs to the universal ribosomal protein uS7 family. Part of the 30S ribosomal subunit. Contacts proteins S9 and S11.

Its function is as follows. One of the primary rRNA binding proteins, it binds directly to 16S rRNA where it nucleates assembly of the head domain of the 30S subunit. Is located at the subunit interface close to the decoding center, probably blocks exit of the E-site tRNA. In Aquifex aeolicus (strain VF5), this protein is Small ribosomal subunit protein uS7A.